A 165-amino-acid chain; its full sequence is 6,7-dimethyl-8-ribityllumazine synthase (165 aa).

5-amino-6-(D-ribitylamino)uracil-binding positions include Trp26, 57–59, and 79–81; these read SVE and VVV. 84-85 contacts (2S)-2-hydroxy-3-oxobutyl phosphate; that stretch reads AT. The Proton donor role is filled by His87. Residue His112 participates in 5-amino-6-(D-ribitylamino)uracil binding. Residue Arg126 participates in (2S)-2-hydroxy-3-oxobutyl phosphate binding.

This sequence belongs to the DMRL synthase family.

The enzyme catalyses (2S)-2-hydroxy-3-oxobutyl phosphate + 5-amino-6-(D-ribitylamino)uracil = 6,7-dimethyl-8-(1-D-ribityl)lumazine + phosphate + 2 H2O + H(+). Its pathway is cofactor biosynthesis; riboflavin biosynthesis; riboflavin from 2-hydroxy-3-oxobutyl phosphate and 5-amino-6-(D-ribitylamino)uracil: step 1/2. Catalyzes the formation of 6,7-dimethyl-8-ribityllumazine by condensation of 5-amino-6-(D-ribitylamino)uracil with 3,4-dihydroxy-2-butanone 4-phosphate. This is the penultimate step in the biosynthesis of riboflavin. This chain is 6,7-dimethyl-8-ribityllumazine synthase, found in Salinispora arenicola (strain CNS-205).